The following is a 253-amino-acid chain: MMGDSVIYYVEQADEPVNRADERARKTFKYFWRELFWERRRIISALDFAMVKVPFFQDGEDGEICEHMWIDDIYFDGLYIYGVLNNEPGELTNVEQGESVCVPVDDISDWMFVCNGIPYGGFTIQAMRGQMTEEERTEHDAAWGIDFGDPGQILLVYEEKEHPENLEEHPMCRNCIDDFRQQLSQNSDYLREQDEDGYTPLHHEAIAGNALMVQAMLEYGANPASTTSEGYTALDFACLTGWQNVADLLEPRH.

2 ANK repeats span residues 196–225 and 229–252; these read DGYTPLHHEAIAGNALMVQAMLEYGANPAS and EGYTALDFACLTGWQNVADLLEPR.

This chain is Putative ankyrin repeat protein NMB1133/NMB1171, found in Neisseria meningitidis serogroup B (strain ATCC BAA-335 / MC58).